Reading from the N-terminus, the 178-residue chain is Deoxyuridine 5'-triphosphate nucleotidohydrolase (178 aa).

The protein belongs to the dUTPase family. Requires Mg(2+) as cofactor.

The catalysed reaction is dUTP + H2O = dUMP + diphosphate + H(+). It participates in pyrimidine metabolism; dUMP biosynthesis; dUMP from dCTP (dUTP route): step 2/2. Its function is as follows. This enzyme is involved in nucleotide metabolism: it produces dUMP, the immediate precursor of thymidine nucleotides and it decreases the intracellular concentration of dUTP so that uracil cannot be incorporated into DNA. In Fowl adenovirus A serotype 1 (strain CELO / Phelps) (FAdV-1), this protein is Deoxyuridine 5'-triphosphate nucleotidohydrolase.